The following is a 503-amino-acid chain: WD repeat-containing protein 55 homolog (503 aa).

The interval 1–131 (MHTHNNFKTP…DSAAFDLDDL (131 aa)) is disordered. Composition is skewed to acidic residues over residues 12-23 (DADELDDLDDDM) and 37-56 (VGED…DMEA). The span at 59–76 (PNQNADENESISSDSSFD) shows a compositional bias: polar residues. Positions 78–96 (NAEDSSDSDDSMLEEDEAE) are enriched in acidic residues. WD repeat units follow at residues 157 to 196 (KLED…NKLL), 201 to 242 (VHSK…KLYE), 244 to 282 (AHDD…PIFE), 285 to 324 (EVED…LYVQ), 327 to 366 (PYEE…YHCD), and 411 to 450 (QHNM…DFGD). Positions 483–503 (TKEDEDNADNNDAAAGPSNSA) are disordered.

It belongs to the WD repeat WDR55 family.

In Drosophila pseudoobscura pseudoobscura (Fruit fly), this protein is WD repeat-containing protein 55 homolog.